Consider the following 365-residue polypeptide: Class I histocompatibility antigen, Gogo-A*0501 alpha chain (365 aa).

The first 24 residues, 1 to 24, serve as a signal peptide directing secretion; that stretch reads MAVVAPRTLLLLLSGALALTQTWA. The segment at 25-114 is alpha-1; that stretch reads GSHSMRYFST…ALRYYNQSED (90 aa). Topologically, residues 25–308 are extracellular; it reads GSHSMRYFST…EPSSQPTIPI (284 aa). N-linked (GlcNAc...) asparagine glycosylation occurs at Asn110. Positions 115–206 are alpha-2; that stretch reads GSHTIQRMYG…ENGKETLQRT (92 aa). 2 disulfides stabilise this stretch: Cys125–Cys188 and Cys227–Cys283. Residues 207-298 are alpha-3; sequence DAPKTHTTHQ…GLPKPLTLRW (92 aa). The Ig-like C1-type domain maps to 209 to 295; it reads PKTHTTHQAV…QHEGLPKPLT (87 aa). The connecting peptide stretch occupies residues 299-308; it reads EPSSQPTIPI. Residues 309–332 form a helical membrane-spanning segment; the sequence is VGIIAGLVLFGAVIAGAVVAAVRW. Residues 333 to 365 are Cytoplasmic-facing; that stretch reads RRKSSDRKGGSYSQAASSDSAQGSDVSLTACKV. Positions 338-365 are disordered; sequence DRKGGSYSQAASSDSAQGSDVSLTACKV. The segment covering 342–359 has biased composition (low complexity); the sequence is GSYSQAASSDSAQGSDVS. The residue at position 343 (Ser343) is a Phosphoserine. Phosphotyrosine is present on Tyr344. Ser345, Ser349, Ser352, Ser356, and Ser359 each carry phosphoserine.

It belongs to the MHC class I family. Heterodimer of an alpha chain and a beta chain (beta-2-microglobulin).

It is found in the membrane. Involved in the presentation of foreign antigens to the immune system. The sequence is that of Class I histocompatibility antigen, Gogo-A*0501 alpha chain from Gorilla gorilla gorilla (Western lowland gorilla).